A 572-amino-acid polypeptide reads, in one-letter code: Putative acyl-CoA synthetase CCNA_01223 (572 aa).

The protein belongs to the ATP-dependent AMP-binding enzyme family.

The protein operates within lipid metabolism; sphingolipid metabolism. Its function is as follows. Involved in de novo bacterial ceramide synthesis. This is Putative acyl-CoA synthetase CCNA_01223 from Caulobacter vibrioides (strain NA1000 / CB15N) (Caulobacter crescentus).